The following is a 76-amino-acid chain: uncharacterized protein (76 aa).

An HTH cro/C1-type domain is found at V15–L69. Residues Q26–A45 constitute a DNA-binding region (H-T-H motif).

This is an uncharacterized protein from Sinorhizobium fredii (strain NBRC 101917 / NGR234).